A 94-amino-acid chain; its full sequence is (2R)-sulfolactate sulfo-lyase subunit alpha (94 aa).

The region spanning 16–90 is the AFP-like domain; it reads VVVVEGVEAG…GEHVHVHNVK (75 aa).

As to quaternary structure, (2R)-sulfolactate sulfo-lyase is composed of a SuyA and a SuyB subunit.

The protein resides in the cytoplasm. It carries out the reaction (2R)-3-sulfolactate = sulfite + pyruvate + H(+). In terms of biological role, together with SuyB, desulfonates sulfolactate to pyruvate and sulfite. In Chromohalobacter salexigens (strain ATCC BAA-138 / DSM 3043 / CIP 106854 / NCIMB 13768 / 1H11), this protein is (2R)-sulfolactate sulfo-lyase subunit alpha (suyA).